The primary structure comprises 346 residues: Magnesium-chelatase 38 kDa subunit (346 aa).

34-41 (GHRGTGKS) is a binding site for ATP.

It belongs to the Mg-chelatase subunits D/I family.

It carries out the reaction protoporphyrin IX + Mg(2+) + ATP + H2O = Mg-protoporphyrin IX + ADP + phosphate + 3 H(+). The protein operates within porphyrin-containing compound metabolism; bacteriochlorophyll biosynthesis. In terms of biological role, involved in bacteriochlorophyll biosynthesis; introduces a magnesium ion into protoporphyrin IX to yield Mg-protoporphyrin IX. This Chlorobaculum parvum (strain DSM 263 / NCIMB 8327) (Chlorobium vibrioforme subsp. thiosulfatophilum) protein is Magnesium-chelatase 38 kDa subunit (bchI).